Reading from the N-terminus, the 152-residue chain is HTH-type transcriptional regulator SlrR (152 aa).

Residues 6–61 enclose the HTH cro/C1-type domain; that stretch reads IRLYRKRKGYSINQLAVESGVSKSYLSKIERGVHTNPSVQFLKKVSATLEVELTEL. The H-T-H motif DNA-binding region spans 17–36; that stretch reads INQLAVESGVSKSYLSKIER. In terms of domain architecture, Sin spans 113–151; sequence YRNRKLTESNIEEWKALMAEAREIGLSVHEVKSFLKTKG.

As to quaternary structure, component of the SlrR/SlrA complex.

Functionally, represses sigma(D)-dependent flagellar genes and activate the eps and yqxM operons. Repressor activity is regulated by SlrA. Controls the initiation of biofilm formation. The polypeptide is HTH-type transcriptional regulator SlrR (slrR) (Bacillus subtilis (strain 168)).